Reading from the N-terminus, the 213-residue chain is Uracil phosphoribosyltransferase (213 aa).

5-phospho-alpha-D-ribose 1-diphosphate-binding positions include arginine 77, arginine 102, and 129-137 (DPMLATGGS). Uracil is bound by residues isoleucine 198 and 203 to 205 (GDA). Aspartate 204 serves as a coordination point for 5-phospho-alpha-D-ribose 1-diphosphate.

The protein belongs to the UPRTase family. Requires Mg(2+) as cofactor.

The enzyme catalyses UMP + diphosphate = 5-phospho-alpha-D-ribose 1-diphosphate + uracil. The protein operates within pyrimidine metabolism; UMP biosynthesis via salvage pathway; UMP from uracil: step 1/1. With respect to regulation, allosterically activated by GTP. Catalyzes the conversion of uracil and 5-phospho-alpha-D-ribose 1-diphosphate (PRPP) to UMP and diphosphate. This is Uracil phosphoribosyltransferase from Mycobacteroides abscessus (strain ATCC 19977 / DSM 44196 / CCUG 20993 / CIP 104536 / JCM 13569 / NCTC 13031 / TMC 1543 / L948) (Mycobacterium abscessus).